The chain runs to 355 residues: Inner membrane protein YghQ (355 aa).

The Periplasmic portion of the chain corresponds to 1-37 (MAGFNIKHWFADGAFRTIIRNSAWLGSSNVVSALLGL). A helical membrane pass occupies residues 38–58 (LALSCAGKGMTPAMFGVLVIV). Residues 59-100 (QSYAKSISDFIKFQTWQLVVQYGTPALTNNNPQQFRNVVSFS) are Cytoplasmic-facing. Residues 101–121 (FSLDIVSGAVAIVGGIALLPF) form a helical membrane-spanning segment. Residues 122-134 (LSHSLGLDDQSFW) are Periplasmic-facing. A helical transmembrane segment spans residues 135-155 (LAALYCTLIPSMASSTPTGIL). The Cytoplasmic segment spans residues 156 to 177 (RAVDRFDLIAVQQATKPFLRAA). Residues 178 to 198 (GSVVAWYFDFGFAGFVIAWYV) traverse the membrane as a helical segment. Topologically, residues 199-261 (SNLVGGTMYW…WSARNSCSTV (63 aa)) are periplasmic. The helical transmembrane segment at 262–282 (LVGIVLGPAAAGLFKIAMTFF) threads the bilayer. Topologically, residues 283-323 (DAAGTPAGLLGKSFYPEVMRLDPRTTRPWLLGVKSGLLAGG) are cytoplasmic. Residues 324 to 344 (IGILVALAVLIVGKPLISLVF) traverse the membrane as a helical segment. Residues 345-355 (GVKYLEAYDLI) are Periplasmic-facing.

The protein localises to the cell inner membrane. In Escherichia coli (strain K12), this protein is Inner membrane protein YghQ (yghQ).